A 312-amino-acid polypeptide reads, in one-letter code: Malate dehydrogenase (312 aa).

NAD(+) is bound by residues 7-13 (GAAGGIG) and Asp-34. Residues Arg-81 and Arg-87 each contribute to the substrate site. NAD(+) is bound by residues Asn-94 and 117–119 (ITN). Substrate contacts are provided by Asn-119 and Arg-153. His-177 serves as the catalytic Proton acceptor. Met-227 is a binding site for NAD(+).

This sequence belongs to the LDH/MDH superfamily. MDH type 1 family. As to quaternary structure, homodimer.

The catalysed reaction is (S)-malate + NAD(+) = oxaloacetate + NADH + H(+). Its function is as follows. Catalyzes the reversible oxidation of malate to oxaloacetate. The protein is Malate dehydrogenase of Salmonella dublin (strain CT_02021853).